The chain runs to 61 residues: Cytotoxin homolog 2 (61 aa).

4 disulfides stabilise this stretch: Cys-3-Cys-22, Cys-15-Cys-39, Cys-43-Cys-54, and Cys-55-Cys-60.

It belongs to the three-finger toxin family. Short-chain subfamily. Orphan group XV sub-subfamily. Expressed by the venom gland.

The protein resides in the secreted. It is found in the target cell membrane. Functionally, has low cytotoxic activity. The protein is Cytotoxin homolog 2 of Naja melanoleuca (Forest cobra).